The following is a 286-amino-acid chain: Pyridoxal kinase PdxY (286 aa).

Ser-8 contacts substrate. The ATP site is built by Asp-110 and Glu-147. Asp-223 is a binding site for substrate.

The protein belongs to the pyridoxine kinase family. PdxY subfamily. Homodimer. Mg(2+) is required as a cofactor.

The enzyme catalyses pyridoxal + ATP = pyridoxal 5'-phosphate + ADP + H(+). It functions in the pathway cofactor metabolism; pyridoxal 5'-phosphate salvage; pyridoxal 5'-phosphate from pyridoxal: step 1/1. In terms of biological role, pyridoxal kinase involved in the salvage pathway of pyridoxal 5'-phosphate (PLP). Catalyzes the phosphorylation of pyridoxal to PLP. This chain is Pyridoxal kinase PdxY, found in Granulibacter bethesdensis (strain ATCC BAA-1260 / CGDNIH1).